The primary structure comprises 831 residues: DNA ligase (831 aa).

NAD(+) contacts are provided by residues 34–38, 83–84, and glutamate 114; these read DADYD and SL. The active-site N6-AMP-lysine intermediate is lysine 116. The NAD(+) site is built by arginine 137, glutamate 174, lysine 291, and lysine 315. Residues cysteine 409, cysteine 412, cysteine 427, and cysteine 433 each coordinate Zn(2+). A BRCT domain is found at 749–831; the sequence is AHTAPLNGQS…LDFLEQYSAQ (83 aa).

Belongs to the NAD-dependent DNA ligase family. LigA subfamily. The cofactor is Mg(2+). It depends on Mn(2+) as a cofactor.

The catalysed reaction is NAD(+) + (deoxyribonucleotide)n-3'-hydroxyl + 5'-phospho-(deoxyribonucleotide)m = (deoxyribonucleotide)n+m + AMP + beta-nicotinamide D-nucleotide.. Functionally, DNA ligase that catalyzes the formation of phosphodiester linkages between 5'-phosphoryl and 3'-hydroxyl groups in double-stranded DNA using NAD as a coenzyme and as the energy source for the reaction. It is essential for DNA replication and repair of damaged DNA. The protein is DNA ligase of Xylella fastidiosa (strain M12).